The chain runs to 387 residues: Succinate--CoA ligase [ADP-forming] subunit beta (387 aa).

Positions 9-236 (KELFAKHNVP…RAATDPLELK (228 aa)) constitute an ATP-grasp domain. ATP is bound by residues K45, 52-54 (GRG), S94, and E99. The Mg(2+) site is built by N191 and D205. Substrate is bound by residues N256 and 318–320 (GIT).

It belongs to the succinate/malate CoA ligase beta subunit family. Heterotetramer of two alpha and two beta subunits. Mg(2+) is required as a cofactor.

It catalyses the reaction succinate + ATP + CoA = succinyl-CoA + ADP + phosphate. The enzyme catalyses GTP + succinate + CoA = succinyl-CoA + GDP + phosphate. Its pathway is carbohydrate metabolism; tricarboxylic acid cycle; succinate from succinyl-CoA (ligase route): step 1/1. Functionally, succinyl-CoA synthetase functions in the citric acid cycle (TCA), coupling the hydrolysis of succinyl-CoA to the synthesis of either ATP or GTP and thus represents the only step of substrate-level phosphorylation in the TCA. The beta subunit provides nucleotide specificity of the enzyme and binds the substrate succinate, while the binding sites for coenzyme A and phosphate are found in the alpha subunit. In Mycobacterium bovis (strain ATCC BAA-935 / AF2122/97), this protein is Succinate--CoA ligase [ADP-forming] subunit beta.